The chain runs to 360 residues: Phospho-N-acetylmuramoyl-pentapeptide-transferase (360 aa).

10 helical membrane passes run 27 to 47, 73 to 93, 94 to 114, 132 to 152, 168 to 188, 199 to 219, 236 to 256, 263 to 283, 288 to 308, and 338 to 358; these read IVSL…MIAW, TMGG…WANL, SNPY…VGFV, WKYF…YAIG, VMPQ…VGTS, GLAI…AWAT, ASEL…FLWF, VFMG…IAVL, FLLV…ILQV, and VIVR…ATLK.

It belongs to the glycosyltransferase 4 family. MraY subfamily. The cofactor is Mg(2+).

It localises to the cell inner membrane. The enzyme catalyses UDP-N-acetyl-alpha-D-muramoyl-L-alanyl-gamma-D-glutamyl-meso-2,6-diaminopimeloyl-D-alanyl-D-alanine + di-trans,octa-cis-undecaprenyl phosphate = di-trans,octa-cis-undecaprenyl diphospho-N-acetyl-alpha-D-muramoyl-L-alanyl-D-glutamyl-meso-2,6-diaminopimeloyl-D-alanyl-D-alanine + UMP. It participates in cell wall biogenesis; peptidoglycan biosynthesis. Catalyzes the initial step of the lipid cycle reactions in the biosynthesis of the cell wall peptidoglycan: transfers peptidoglycan precursor phospho-MurNAc-pentapeptide from UDP-MurNAc-pentapeptide onto the lipid carrier undecaprenyl phosphate, yielding undecaprenyl-pyrophosphoryl-MurNAc-pentapeptide, known as lipid I. This is Phospho-N-acetylmuramoyl-pentapeptide-transferase from Pectobacterium carotovorum subsp. carotovorum (strain PC1).